A 120-amino-acid chain; its full sequence is NAD(P)H-quinone oxidoreductase subunit 3, chloroplastic (120 aa).

The next 3 membrane-spanning stretches (helical) occupy residues 9-29 (IFWA…LISG), 64-84 (MFAL…PWAM), and 88-108 (VLGV…IVGS).

The protein belongs to the complex I subunit 3 family. As to quaternary structure, NDH is composed of at least 16 different subunits, 5 of which are encoded in the nucleus.

It localises to the plastid. It is found in the chloroplast thylakoid membrane. It carries out the reaction a plastoquinone + NADH + (n+1) H(+)(in) = a plastoquinol + NAD(+) + n H(+)(out). The catalysed reaction is a plastoquinone + NADPH + (n+1) H(+)(in) = a plastoquinol + NADP(+) + n H(+)(out). Its function is as follows. NDH shuttles electrons from NAD(P)H:plastoquinone, via FMN and iron-sulfur (Fe-S) centers, to quinones in the photosynthetic chain and possibly in a chloroplast respiratory chain. The immediate electron acceptor for the enzyme in this species is believed to be plastoquinone. Couples the redox reaction to proton translocation, and thus conserves the redox energy in a proton gradient. This chain is NAD(P)H-quinone oxidoreductase subunit 3, chloroplastic, found in Phaseolus vulgaris (Kidney bean).